The primary structure comprises 213 residues: tRNA (guanine-N(7)-)-methyltransferase (213 aa).

Positions 44, 69, 96, and 118 each coordinate S-adenosyl-L-methionine. Asp-118 is an active-site residue. Position 122 (Lys-122) interacts with substrate. The tract at residues 124–129 is interaction with RNA; that stretch reads RHEKRR. Residues Asp-154 and 191–194 each bind substrate; that span reads TEYE.

Belongs to the class I-like SAM-binding methyltransferase superfamily. TrmB family.

It carries out the reaction guanosine(46) in tRNA + S-adenosyl-L-methionine = N(7)-methylguanosine(46) in tRNA + S-adenosyl-L-homocysteine. The protein operates within tRNA modification; N(7)-methylguanine-tRNA biosynthesis. In terms of biological role, catalyzes the formation of N(7)-methylguanine at position 46 (m7G46) in tRNA. The polypeptide is tRNA (guanine-N(7)-)-methyltransferase (Oceanobacillus iheyensis (strain DSM 14371 / CIP 107618 / JCM 11309 / KCTC 3954 / HTE831)).